Consider the following 375-residue polypeptide: MFNPHVLDVPAVIFDNGSGLCKAGVSGEIGPRHVINSVLGHRKFNMPSARLNQYFVGQEALYKFDALHLHYPIKRGLVTGWDDMEKLWKHLFEWELGVKPSQQPVLMTEPSLNPREIREKLAEMMFENFSVPGFYLSNHAVAALYASACVTGLVVDSGDGVTCAVPIFEGYSLPHAVTKLYTAGRDITEHLTQLLFANGFNFPCILNKAVANNIKEKLCYIALEPEKELRKSRGEVLGAYRLPDGHVIHFGDELYQVPEVLFAPDQLGIHSPGLSKMVSSSIMKCDTDIQNKLYAEIVLSGGTTLFPGLEERLMKEVEQLASKGTPIKITASPDRCFSAWIGASIMTSMSSFKQMWVTSADFKEYGTSVVQRRCF.

The protein belongs to the actin family.

It is found in the cytoplasm. The protein localises to the cytoskeleton. Its subcellular location is the nucleus. The protein resides in the cytoplasmic vesicle. It localises to the secretory vesicle. It is found in the acrosome. In terms of biological role, negatively regulates the Hedgehog (SHH) signaling. Binds to the promoter of the SHH signaling mediator, GLI1, and inhibits its expression. This chain is Actin-related protein T1 (ACTRT1), found in Macaca fascicularis (Crab-eating macaque).